The chain runs to 397 residues: Tryptophan synthase beta chain (397 aa).

Residue Lys-87 is modified to N6-(pyridoxal phosphate)lysine.

Belongs to the TrpB family. Tetramer of two alpha and two beta chains. Pyridoxal 5'-phosphate serves as cofactor.

The enzyme catalyses (1S,2R)-1-C-(indol-3-yl)glycerol 3-phosphate + L-serine = D-glyceraldehyde 3-phosphate + L-tryptophan + H2O. Its pathway is amino-acid biosynthesis; L-tryptophan biosynthesis; L-tryptophan from chorismate: step 5/5. In terms of biological role, the beta subunit is responsible for the synthesis of L-tryptophan from indole and L-serine. The chain is Tryptophan synthase beta chain from Klebsiella pneumoniae (strain 342).